The sequence spans 269 residues: UPF0739 protein C1orf74 (269 aa).

Belongs to the UPF0739 family.

The chain is UPF0739 protein C1orf74 (C1orf74) from Homo sapiens (Human).